Consider the following 426-residue polypeptide: Serine protease HTRA2, mitochondrial (426 aa).

Residues 31–58 show a composition bias toward low complexity; the sequence is SSTCNSTNTDNGSHNTNYNSSNNNNNNN. A disordered region spans residues 31-59; sequence SSTCNSTNTDNGSHNTNYNSSNNNNNNND. A helical membrane pass occupies residues 71–87; sequence FLVPFSLGALASSVVAG. The short motif at 79–82 is the IAP-binding element; sequence ALAS. The interval 143-306 is serine protease; it reads SNGSGFVIEQ…IPIDYVKLFL (164 aa). Active-site charge relay system residues include histidine 161, aspartate 193, and serine 270. A PDZ domain is found at 329–414; sequence MGITMLTLTP…DLDMVILRGV (86 aa).

It belongs to the peptidase S1C family. Interacts with th/DIAP1 (via BIR 2 domain).

The protein localises to the mitochondrion intermembrane space. Its subcellular location is the mitochondrion membrane. It catalyses the reaction Cleavage of non-polar aliphatic amino-acids at the P1 position, with a preference for Val, Ile and Met. At the P2 and P3 positions, Arg is selected most strongly with a secondary preference for other hydrophilic residues.. Its function is as follows. Serine protease that shows proteolytic activity against a non-specific substrate beta-casein. Promotes or induces cell death either by direct binding to and inhibition of BIRC proteins (also called inhibitor of apoptosis proteins, IAPs), leading to an increase in caspase activity, or by a BIRC inhibition-independent, caspase-independent and serine protease activity-dependent mechanism. Can antagonize antiapoptotic activity of th/Diap1 by directly inducing the degradation of th/Diap1. The polypeptide is Serine protease HTRA2, mitochondrial (Drosophila grimshawi (Hawaiian fruit fly)).